The sequence spans 346 residues: Leucine zipper protein 2 (346 aa).

The first 19 residues, 1 to 19 (MKFSPAHYLLPLLPALVLS), serve as a signal peptide directing secretion. A coiled-coil region spans residues 16–211 (LVLSTRQDYE…QMKAMKETVQ (196 aa)). N-linked (GlcNAc...) asparagine glycosylation is present at N133. Residues 164-192 (LRYGKKDLLFKAQQLTDLEQKLAVAKNEL) form a leucine-zipper region. Disordered stretches follow at residues 221–240 (QPPP…LLPP) and 248–346 (PDAA…EKIL). Low complexity predominate over residues 250 to 261 (AAAKSKPQQSAS). A compositionally biased stretch (polar residues) spans 262 to 283 (GNNESSQVESTKEGNPSTTACD). Residue N264 is glycosylated (N-linked (GlcNAc...) asparagine). Over residues 286–298 (DEGRPCSMKHKES) the composition is skewed to basic and acidic residues. N-linked (GlcNAc...) asparagine glycosylation is present at N302.

The protein resides in the secreted. This chain is Leucine zipper protein 2 (LUZP2), found in Homo sapiens (Human).